Here is a 151-residue protein sequence, read N- to C-terminus: Large ribosomal subunit protein uL13 (151 aa).

It belongs to the universal ribosomal protein uL13 family. As to quaternary structure, part of the 50S ribosomal subunit.

Functionally, this protein is one of the early assembly proteins of the 50S ribosomal subunit, although it is not seen to bind rRNA by itself. It is important during the early stages of 50S assembly. The sequence is that of Large ribosomal subunit protein uL13 from Nostoc sp. (strain PCC 7120 / SAG 25.82 / UTEX 2576).